The sequence spans 63 residues: 2-hydroxymuconate tautomerase (63 aa).

The Proton acceptor; via imino nitrogen role is filled by Pro2.

The protein belongs to the 4-oxalocrotonate tautomerase family. In terms of assembly, homohexamer.

The catalysed reaction is (2Z,4E)-2-hydroxyhexa-2,4-dienedioate = (3E)-2-oxohex-3-enedioate. It functions in the pathway xenobiotic degradation; toluene degradation. Functionally, catalyzes the ketonization of 2-hydroxymuconate stereoselectively to yield 2-oxo-3-hexenedioate. This chain is 2-hydroxymuconate tautomerase (dmpI), found in Pseudomonas sp. (strain CF600).